The chain runs to 261 residues: Troponin T, slow skeletal muscle (261 aa).

Acidic residues predominate over residues 1–30 (MSDTEEQEYEEEQAEDEEAVEEEAPEEPEP). Disordered stretches follow at residues 1–61 (MSDT…ERVD) and 108–152 (ERAE…KKKV). Ser-2 carries the post-translational modification Phosphoserine; by CK2. Residues 31-40 (VAEREEERPK) show a composition bias toward basic and acidic residues. Pro residues predominate over residues 42–54 (SRPVVPPLIPPKI). Residues 108–148 (ERAEQQRFRTEKERERQAKLAEEKMRKEEEEAKKRAEDDAK) show a composition bias toward basic and acidic residues.

It belongs to the troponin T family. Interacts with TPM3. As to expression, expressed in soleus muscle. Isoform 4 is predominantly expressed in fast muscles.

Functionally, troponin T is the tropomyosin-binding subunit of troponin, the thin filament regulatory complex which confers calcium-sensitivity to striated muscle actomyosin ATPase activity. This is Troponin T, slow skeletal muscle (Tnnt1) from Rattus norvegicus (Rat).